Reading from the N-terminus, the 265-residue chain is Enolase-phosphatase E1 (265 aa).

Aspartate 18 and glutamate 20 together coordinate Mg(2+). Substrate contacts are provided by residues 144 to 145 and lysine 188; that span reads SS. Mg(2+) is bound at residue aspartate 215.

The protein belongs to the HAD-like hydrolase superfamily. MasA/MtnC family. As to quaternary structure, monomer. Mg(2+) serves as cofactor.

The protein localises to the cytoplasm. The protein resides in the nucleus. The enzyme catalyses 5-methylsulfanyl-2,3-dioxopentyl phosphate + H2O = 1,2-dihydroxy-5-(methylsulfanyl)pent-1-en-3-one + phosphate. It functions in the pathway amino-acid biosynthesis; L-methionine biosynthesis via salvage pathway; L-methionine from S-methyl-5-thio-alpha-D-ribose 1-phosphate: step 3/6. The protein operates within amino-acid biosynthesis; L-methionine biosynthesis via salvage pathway; L-methionine from S-methyl-5-thio-alpha-D-ribose 1-phosphate: step 4/6. Bifunctional enzyme that catalyzes the enolization of 2,3-diketo-5-methylthiopentyl-1-phosphate (DK-MTP-1-P) into the intermediate 2-hydroxy-3-keto-5-methylthiopentenyl-1-phosphate (HK-MTPenyl-1-P), which is then dephosphorylated to form the acireductone 1,2-dihydroxy-3-keto-5-methylthiopentene (DHK-MTPene). This chain is Enolase-phosphatase E1, found in Candida albicans (strain SC5314 / ATCC MYA-2876) (Yeast).